A 154-amino-acid chain; its full sequence is Small ribosomal subunit protein uS11c (154 aa).

This sequence belongs to the universal ribosomal protein uS11 family. As to quaternary structure, part of the 30S ribosomal subunit.

The protein localises to the plastid. The polypeptide is Small ribosomal subunit protein uS11c (Helicosporidium sp. subsp. Simulium jonesii (Green alga)).